A 207-amino-acid polypeptide reads, in one-letter code: Serotonin N-acetyltransferase (207 aa).

Positions 1–28 (MSTQSTHPLKPEAPRLPPGIPESPSCQR) are disordered. A Phosphothreonine; by PKA modification is found at threonine 31. Positions 35–194 (SEFRCLTPED…SLTFMELHCS (160 aa)) constitute an N-acetyltransferase domain. Leucine 124 is a substrate binding site. Acetyl-CoA-binding positions include 124-126 (LAV) and 132-137 (QQGRGP). Substrate is bound at residue methionine 159. An acetyl-CoA-binding site is contributed by 168–170 (YER). Serine 205 carries the phosphoserine modification.

The protein belongs to the acetyltransferase family. AANAT subfamily. As to quaternary structure, monomer. Interacts with several 14-3-3 proteins, including YWHAB, YWHAE, YWHAG and YWHAZ, preferentially when phosphorylated at Thr-31. Phosphorylation on Ser-205 also allows binding to YWHAZ, but with lower affinity. The interaction with YWHAZ considerably increases affinity for arylalkylamines and acetyl-CoA and protects the enzyme from dephosphorylation and proteasomal degradation. It may also prevent thiol-dependent inactivation. In terms of processing, cAMP-dependent phosphorylation on both N-terminal Thr-31 and C-terminal Ser-205 regulates AANAT activity by promoting interaction with 14-3-3 proteins. As to expression, highly expressed in pineal gland and at lower levels in the retina. Weak expression in several brain regions and in the pituitary gland.

The protein resides in the cytoplasm. It carries out the reaction a 2-arylethylamine + acetyl-CoA = an N-acetyl-2-arylethylamine + CoA + H(+). It functions in the pathway aromatic compound metabolism; melatonin biosynthesis; melatonin from serotonin: step 1/2. In terms of biological role, controls the night/day rhythm of melatonin production in the pineal gland. Catalyzes the N-acetylation of serotonin into N-acetylserotonin, the penultimate step in the synthesis of melatonin. This Homo sapiens (Human) protein is Serotonin N-acetyltransferase (AANAT).